A 239-amino-acid polypeptide reads, in one-letter code: Uridylate kinase (239 aa).

12 to 15 (KLSG) is an ATP binding site. The tract at residues 20 to 25 (GEKGFG) is involved in allosteric activation by GTP. Glycine 54 serves as a coordination point for UMP. 2 residues coordinate ATP: glycine 55 and arginine 59. Residues aspartate 72 and 133–140 (TGNPFFST) each bind UMP. The ATP site is built by tyrosine 166 and aspartate 169.

The protein belongs to the UMP kinase family. In terms of assembly, homohexamer.

The protein resides in the cytoplasm. The catalysed reaction is UMP + ATP = UDP + ADP. The protein operates within pyrimidine metabolism; CTP biosynthesis via de novo pathway; UDP from UMP (UMPK route): step 1/1. Allosterically activated by GTP. Inhibited by UTP. Catalyzes the reversible phosphorylation of UMP to UDP. This is Uridylate kinase from Caldicellulosiruptor saccharolyticus (strain ATCC 43494 / DSM 8903 / Tp8T 6331).